The following is an 883-amino-acid chain: Putative GTP diphosphokinase RSH1, chloroplastic (883 aa).

A chloroplast-targeting transit peptide spans 1-55; the sequence is MTSASSMSVSVECVNICNLTKGDGNARSDCSALSCAWKAPRALTGFLASTAHPPV. The HD domain maps to 172–279; sequence FIIHPVAVAR…VKLADRLHNM (108 aa). The TGS domain maps to 562–625; the sequence is LGSRVFVFTP…ENAEVVEIVT (64 aa). Residues 710-726 are compositionally biased toward polar residues; the sequence is QSQDKSRDTTPAPQNGS. Residues 710-746 are disordered; the sequence is QSQDKSRDTTPAPQNGSVWAPKVNGKHNKAIKNSSSD. An ACT domain is found at 796–867; sequence WLCVVSMDRK…LVLGVLGWSS (72 aa).

It belongs to the RelA/SpoT family. In terms of assembly, interacts with RPP5.

It localises to the plastid. The protein localises to the chloroplast. The catalysed reaction is GTP + ATP = guanosine 3'-diphosphate 5'-triphosphate + AMP. Functionally, may be involved in a rapid plant ppGpp (guanosine 3'-diphosphate 5'-diphosphate)-mediated response to pathogens and other stresses. This is Putative GTP diphosphokinase RSH1, chloroplastic (RSH1) from Arabidopsis thaliana (Mouse-ear cress).